The chain runs to 428 residues: Glutamyl-tRNA reductase (428 aa).

Residues 49 to 52 (TCNR), Ser-109, 114 to 116 (EGQ), and Gln-120 each bind substrate. Cys-50 functions as the Nucleophile in the catalytic mechanism. 189 to 194 (GAGKMS) lines the NADP(+) pocket.

Belongs to the glutamyl-tRNA reductase family. Homodimer.

It catalyses the reaction (S)-4-amino-5-oxopentanoate + tRNA(Glu) + NADP(+) = L-glutamyl-tRNA(Glu) + NADPH + H(+). It functions in the pathway porphyrin-containing compound metabolism; protoporphyrin-IX biosynthesis; 5-aminolevulinate from L-glutamyl-tRNA(Glu): step 1/2. Its pathway is porphyrin-containing compound metabolism; chlorophyll biosynthesis. Its function is as follows. Catalyzes the NADPH-dependent reduction of glutamyl-tRNA(Glu) to glutamate 1-semialdehyde (GSA). This is Glutamyl-tRNA reductase from Microcystis aeruginosa (strain NIES-843 / IAM M-2473).